Reading from the N-terminus, the 196-residue chain is Prefoldin subunit 3 (196 aa).

Ala-2 is subject to N-acetylalanine. Position 58 is an N6-acetyllysine (Lys-58).

The protein belongs to the prefoldin subunit alpha family. In terms of assembly, heterohexamer of two PFD-alpha type and four PFD-beta type subunits. Binds to the C-terminal part of VHL.

Its subcellular location is the cytoplasm. The protein localises to the nucleus. Binds specifically to cytosolic chaperonin (c-CPN) and transfers target proteins to it. Binds to nascent polypeptide chain and promotes folding in an environment in which there are many competing pathways for nonnative proteins. This Mus musculus (Mouse) protein is Prefoldin subunit 3 (Vbp1).